The primary structure comprises 212 residues: Ras-related protein Rab-2A (212 aa).

GTP contacts are provided by Gly16, Val17, Gly18, Lys19, Ser20, Cys21, and Thr38. Mg(2+) is bound at residue Ser20. The Switch 1 motif lies at 37–42 (LTIGVE). The Mg(2+) site is built by Thr38 and Asp61. A Switch 2 motif is present at residues 63 to 72 (AGQESFRSIT). Residues Gly64, Asn119, Lys120, Asp122, Ala150, and Lys151 each contribute to the GTP site. Residues Cys211 and Cys212 are each lipidated (S-geranylgeranyl cysteine).

The protein belongs to the small GTPase superfamily. Rab family. In terms of assembly, interacts with PRKCI. Interacts with TRIP11. Interacts (in GTP-bound form) with GARIN1B. Requires Mg(2+) as cofactor. Prenylated. Prenylation is required for association with cellular membranes.

It localises to the endoplasmic reticulum-Golgi intermediate compartment membrane. Its subcellular location is the melanosome. The protein resides in the endoplasmic reticulum membrane. It is found in the golgi apparatus membrane. The protein localises to the cytoplasmic vesicle. It localises to the secretory vesicle. Its subcellular location is the acrosome. It catalyses the reaction GTP + H2O = GDP + phosphate + H(+). Its activity is regulated as follows. Regulated by guanine nucleotide exchange factors (GEFs) which promote the exchange of bound GDP for free GTP, GTPase activating proteins (GAPs) which increase the GTP hydrolysis activity, and GDP dissociation inhibitors (GDIs) which inhibit the dissociation of the nucleotide from the GTPase. Functionally, the small GTPases Rab are key regulators of intracellular membrane trafficking, from the formation of transport vesicles to their fusion with membranes. Rabs cycle between active GTP-bound and inactive GDP-bound states. In their active state, drive transport of vesicular carriers from donor organelles to acceptor organelles to regulate the membrane traffic that maintains organelle identity and morphology. RAB2A regulates autophagy by promoting autophagosome-lysosome fusion via recruitment of the HOPS endosomal tethering complex; this process involves autophagosomal RAB2A and lysosomal RAB39A recruitment of HOPS subcomplexes VPS39-VPS11 and VPS41-VPS16-VPS18-VPS33A, respectively, which assemble into a functional complex to mediate membrane tethering and SNAREs-driven membrane fusion. Required for protein transport from the endoplasmic reticulum to the Golgi complex. Regulates the compacted morphology of the Golgi. Together with RAB2B, redundantly required for efficient autophagic flux. The polypeptide is Ras-related protein Rab-2A (RAB2A) (Gallus gallus (Chicken)).